The chain runs to 346 residues: 3 beta-hydroxysteroid dehydrogenase/Delta 5--&gt;4-isomerase (346 aa).

The active-site Proton acceptor is Y147. K151 lines the NAD(+) pocket.

It belongs to the 3-beta-HSD family.

The catalysed reaction is a 3beta-hydroxy-Delta(5)-steroid + NAD(+) = a 3-oxo-Delta(5)-steroid + NADH + H(+). It catalyses the reaction a 3-oxo-Delta(5)-steroid = a 3-oxo-Delta(4)-steroid. Its pathway is lipid metabolism; steroid biosynthesis. Its function is as follows. Catalyzes the oxidative conversion of Delta(5)-ene-3-beta-hydroxy steroid, and the oxidative conversion of ketosteroids. The 3-beta-HSD enzymatic system plays a crucial role in the biosynthesis of all classes of hormonal steroids. During viral infection, steroid production contributes to virulence by inhibiting the host inflammatory response. This is 3 beta-hydroxysteroid dehydrogenase/Delta 5--&gt;4-isomerase (OPG174) from Homo sapiens (Human).